A 620-amino-acid chain; its full sequence is Chaperone protein HscA homolog (620 aa).

Belongs to the heat shock protein 70 family.

Functionally, chaperone involved in the maturation of iron-sulfur cluster-containing proteins. Has a low intrinsic ATPase activity which is markedly stimulated by HscB. This Colwellia psychrerythraea (strain 34H / ATCC BAA-681) (Vibrio psychroerythus) protein is Chaperone protein HscA homolog.